The sequence spans 188 residues: Translation machinery-associated protein 22 (188 aa).

In terms of domain architecture, SUI1 spans 96–167 (VTIKRIERNK…EIEEFLLEKY (72 aa)).

This sequence belongs to the DENR family. In terms of assembly, interacts with the 40S ribosomal subunit.

The protein resides in the cytoplasm. This is Translation machinery-associated protein 22 (TMA22) from Chaetomium globosum (strain ATCC 6205 / CBS 148.51 / DSM 1962 / NBRC 6347 / NRRL 1970) (Soil fungus).